The following is a 334-amino-acid chain: MTKPIVFSGAQPSGELTIGNYMGALRQWVNMQDDYHCIYCIVDQHAITVRQDAQKLRKATLDTLALYLACGIDPEKSTIFVQSHVPEHAQLGWALNCYTYFGELSRMTQFKDKSARYAENINAGLFDYPVLMAADILLYQTNLVPVGEDQKQHLELSRDIAQRFNALYGDIFKVPEPFIPKSGARVMSLLEPTKKMSKSDDNRNNVIGLLEDPKSVVKKIKRAVTDSDEPPVVRYDVQNKAGVSNLLDILSAVTGQSIPELEKQFEGKMYGHLKGEVADAVSGMLTELQERYHRFRNDEAFLQQVMKDGAEKASAHASRTLKAVYEAIGFVAKP.

Residues 11-13 (QPS) and 19-20 (GN) each bind ATP. Residues 12–20 (PSGELTIGN) carry the 'HIGH' region motif. Residue Asp-135 coordinates L-tryptophan. ATP-binding positions include 147-149 (GED), Val-186, and 195-199 (KMSKS). A 'KMSKS' region motif is present at residues 195 to 199 (KMSKS).

It belongs to the class-I aminoacyl-tRNA synthetase family. Homodimer.

It is found in the cytoplasm. It catalyses the reaction tRNA(Trp) + L-tryptophan + ATP = L-tryptophyl-tRNA(Trp) + AMP + diphosphate + H(+). Catalyzes the attachment of tryptophan to tRNA(Trp). The protein is Tryptophan--tRNA ligase of Escherichia coli O157:H7.